Consider the following 451-residue polypeptide: UDP-N-acetylmuramoylalanine--D-glutamate ligase (451 aa).

120–126 is a binding site for ATP; it reads GSNGKTT.

The protein belongs to the MurCDEF family.

It localises to the cytoplasm. The catalysed reaction is UDP-N-acetyl-alpha-D-muramoyl-L-alanine + D-glutamate + ATP = UDP-N-acetyl-alpha-D-muramoyl-L-alanyl-D-glutamate + ADP + phosphate + H(+). It functions in the pathway cell wall biogenesis; peptidoglycan biosynthesis. Cell wall formation. Catalyzes the addition of glutamate to the nucleotide precursor UDP-N-acetylmuramoyl-L-alanine (UMA). This is UDP-N-acetylmuramoylalanine--D-glutamate ligase (murD) from Bacillus subtilis (strain 168).